Here is a 371-residue protein sequence, read N- to C-terminus: Phosphate acyltransferase (371 aa).

This sequence belongs to the PlsX family. As to quaternary structure, homodimer. Probably interacts with PlsY.

It localises to the cytoplasm. It carries out the reaction a fatty acyl-[ACP] + phosphate = an acyl phosphate + holo-[ACP]. The protein operates within lipid metabolism; phospholipid metabolism. In terms of biological role, catalyzes the reversible formation of acyl-phosphate (acyl-PO(4)) from acyl-[acyl-carrier-protein] (acyl-ACP). This enzyme utilizes acyl-ACP as fatty acyl donor, but not acyl-CoA. In Ruegeria pomeroyi (strain ATCC 700808 / DSM 15171 / DSS-3) (Silicibacter pomeroyi), this protein is Phosphate acyltransferase.